A 123-amino-acid polypeptide reads, in one-letter code: Large ribosomal subunit protein bL12 (123 aa).

It belongs to the bacterial ribosomal protein bL12 family. As to quaternary structure, homodimer. Part of the ribosomal stalk of the 50S ribosomal subunit. Forms a multimeric L10(L12)X complex, where L10 forms an elongated spine to which 2 to 4 L12 dimers bind in a sequential fashion. Binds GTP-bound translation factors.

In terms of biological role, forms part of the ribosomal stalk which helps the ribosome interact with GTP-bound translation factors. Is thus essential for accurate translation. In Finegoldia magna (strain ATCC 29328 / DSM 20472 / WAL 2508) (Peptostreptococcus magnus), this protein is Large ribosomal subunit protein bL12.